A 377-amino-acid chain; its full sequence is MLSNFLKVNSKALGHIRTFASKSGEIKHNFKKADTYLCDGPSDSTVTNKDELISFFTEMSRFRRLETVCDGLYKKKLIRGFCHLYTGQEAVCAGLESAITKDDHIITAYRDHTYMLSRGATPEEIFAELLMKETGCSKGKGGSMHMFTKNFYGGNGIVGAQCPLGAGIAFAQKYNKTGNVCLAMYGDGAANQGQLFEAFNMASLWKLPVIFICENNKYGMGTSQKRSTAGHDFYTRGHYVAGLKVDGMDVFAVKEAGKYAAEWCRAGNGPIILEMDTYRYVGHSMSDPGITYRTREEVNHVRQTRDPIENIRQIILDNKIATEDQLAAIEETVRDEMEKASEKAIAAPLPQARELFTNVYLQEVPVRGVEFVNSFKP.

A mitochondrion-targeting transit peptide spans Met-1–Ile-26. The pyruvate site is built by His-83, Tyr-109, Arg-110, Gly-156, Val-158, Asp-187, Gly-188, Ala-189, Asn-216, and Tyr-218. Residues Tyr-109, Arg-110, Gly-156, Val-158, Asp-187, Gly-188, Ala-189, and Asn-216 each coordinate thiamine diphosphate. Residue Asp-187 coordinates Mg(2+). The Mg(2+) site is built by Asn-216 and Tyr-218. Position 283 (His-283) interacts with thiamine diphosphate.

As to quaternary structure, tetramer of 2 alpha and 2 beta subunits. It depends on thiamine diphosphate as a cofactor. The cofactor is Mg(2+).

The protein resides in the mitochondrion matrix. It carries out the reaction N(6)-[(R)-lipoyl]-L-lysyl-[protein] + pyruvate + H(+) = N(6)-[(R)-S(8)-acetyldihydrolipoyl]-L-lysyl-[protein] + CO2. With respect to regulation, E1 activity is regulated by phosphorylation (inactivation) and dephosphorylation (activation) of the alpha subunit. Its function is as follows. The pyruvate dehydrogenase complex catalyzes the overall conversion of pyruvate to acetyl-CoA and CO(2). It contains multiple copies of three enzymatic components: pyruvate dehydrogenase (E1), dihydrolipoamide acetyltransferase (E2) and lipoamide dehydrogenase (E3). This chain is Pyruvate dehydrogenase E1 component subunit alpha, mitochondrial (pdhA), found in Dictyostelium discoideum (Social amoeba).